Here is a 235-residue protein sequence, read N- to C-terminus: Small ribosomal subunit protein uS3 (235 aa).

In terms of domain architecture, KH type-2 spans 39–107 (VRKFLNKELA…PAQINIAEVK (69 aa)).

It belongs to the universal ribosomal protein uS3 family. In terms of assembly, part of the 30S ribosomal subunit. Forms a tight complex with proteins S10 and S14.

Its function is as follows. Binds the lower part of the 30S subunit head. Binds mRNA in the 70S ribosome, positioning it for translation. The protein is Small ribosomal subunit protein uS3 of Actinobacillus pleuropneumoniae serotype 5b (strain L20).